The sequence spans 207 residues: Coiled-coil domain-containing protein 25 (207 aa).

At 1 to 104 (MVFYFTSAVV…SNLKKTADMD (104 aa)) the chain is on the extracellular side. Positions 20-24 (KDKYE) are DNA-binding. A helical transmembrane segment spans residues 105–121 (IGQIGFHRQKEVKIVAV). The stretch at 112-189 (RQKEVKIVAV…EDLKNYTSLM (78 aa)) forms a coiled coil. The Cytoplasmic portion of the chain corresponds to 122–207 (EKKINEIVNR…EDGYDSDDFM (86 aa)). The span at 140–183 (YPDLAAEKESRDREERNEKKAQIQEQKKKEKEEVKKKKEMEDLK) shows a compositional bias: basic and acidic residues. The segment at 140-207 (YPDLAAEKES…EDGYDSDDFM (68 aa)) is disordered. A compositionally biased stretch (polar residues) spans 184–198 (NYTSLMKSDNMTTNE). S203 carries the phosphoserine modification.

Belongs to the CCDC25 family. Interacts (via cytoplasmic region) with ILK.

It localises to the cell membrane. The protein resides in the endomembrane system. In terms of biological role, transmembrane receptor that senses neutrophil extracellular traps (NETs) and triggers the ILK-PARVB pathway to enhance cell motility. NETs are mainly composed of DNA fibers and are released by neutrophils to bind pathogens during inflammation. Specifically binds NETs on its extracellular region, in particular the 8-OHdG-enriched DNA present in NETs, and recruits ILK, initiating the ILK-PARVB cascade to induce cytoskeleton rearrangement and directional migration of cells. In Danio rerio (Zebrafish), this protein is Coiled-coil domain-containing protein 25.